Here is a 434-residue protein sequence, read N- to C-terminus: MASFVIEGGHRLSGEIHPQGAKNEVLQIICATLLTAEEVTVNNIPDILDVNNLIQLMREMGVTVAKEGIDTYSFKAENVDLAYLESDKFLKKCSSLRGSVMLIGPMVARFGKALISKPGGDKIGRRRLDTHFVGIQNLGADFRYDESRGIYEITADRLQGSYMLLDEASVTGTANILMAAVLAKGTTTIYNAACEPYLQQLCRMLNRMGAKISGIASNLLTIEGVEELHGTQHTVLPDMIEVGSFIGMAAMTKSEITIKNVSYENLGIIPESFRRLGIKLEQRGDDIYVPAQETYEIESFIDGSIMTIADAPWPGLTPDLLSVMLVVATQAKGSVLIHQKMFESRLFFVDKLIDMGAQIILCDPHRAVVIGHNHGFKLRGARLTSPDIRAGIALLIAAMSAEGTSTISNIEQIDRGYQNIEGRLNAIGARITRI.

Residue 22–23 (KN) participates in phosphoenolpyruvate binding. Arginine 97 serves as a coordination point for UDP-N-acetyl-alpha-D-glucosamine. The active-site Proton donor is aspartate 121. UDP-N-acetyl-alpha-D-glucosamine-binding residues include aspartate 319 and methionine 341.

Belongs to the EPSP synthase family. MurA subfamily.

The protein resides in the cytoplasm. It carries out the reaction phosphoenolpyruvate + UDP-N-acetyl-alpha-D-glucosamine = UDP-N-acetyl-3-O-(1-carboxyvinyl)-alpha-D-glucosamine + phosphate. It functions in the pathway cell wall biogenesis; peptidoglycan biosynthesis. Functionally, cell wall formation. Adds enolpyruvyl to UDP-N-acetylglucosamine. The protein is UDP-N-acetylglucosamine 1-carboxyvinyltransferase of Bacteroides thetaiotaomicron (strain ATCC 29148 / DSM 2079 / JCM 5827 / CCUG 10774 / NCTC 10582 / VPI-5482 / E50).